Here is a 415-residue protein sequence, read N- to C-terminus: Gamma-glutamyl phosphate reductase (415 aa).

The protein belongs to the gamma-glutamyl phosphate reductase family.

It localises to the cytoplasm. It carries out the reaction L-glutamate 5-semialdehyde + phosphate + NADP(+) = L-glutamyl 5-phosphate + NADPH + H(+). It participates in amino-acid biosynthesis; L-proline biosynthesis; L-glutamate 5-semialdehyde from L-glutamate: step 2/2. Functionally, catalyzes the NADPH-dependent reduction of L-glutamate 5-phosphate into L-glutamate 5-semialdehyde and phosphate. The product spontaneously undergoes cyclization to form 1-pyrroline-5-carboxylate. The sequence is that of Gamma-glutamyl phosphate reductase from Mycolicibacterium gilvum (strain PYR-GCK) (Mycobacterium gilvum (strain PYR-GCK)).